Consider the following 132-residue polypeptide: Small ribosomal subunit protein uS8 (132 aa).

This sequence belongs to the universal ribosomal protein uS8 family. In terms of assembly, part of the 30S ribosomal subunit. Contacts proteins S5 and S12.

In terms of biological role, one of the primary rRNA binding proteins, it binds directly to 16S rRNA central domain where it helps coordinate assembly of the platform of the 30S subunit. This is Small ribosomal subunit protein uS8 from Saccharopolyspora erythraea (strain ATCC 11635 / DSM 40517 / JCM 4748 / NBRC 13426 / NCIMB 8594 / NRRL 2338).